The primary structure comprises 78 residues: Molt-inhibiting hormone (78 aa).

Intrachain disulfides connect Cys7–Cys44, Cys24–Cys40, and Cys27–Cys53.

Its subcellular location is the secreted. Its function is as follows. Inhibits Y-organs where molting hormone (ecdysteroid) is secreted. A molting cycle is initiated when MIH secretion diminishes or stops. Also has significant hyperglycemic hormone (CHH) activity. The polypeptide is Molt-inhibiting hormone (Cancer pagurus (Rock crab)).